The sequence spans 278 residues: Adenosylcobinamide-GDP ribazoletransferase (278 aa).

A run of 7 helical transmembrane segments spans residues 31 to 51, 66 to 86, 115 to 135, 148 to 168, 187 to 207, 215 to 237, and 247 to 267; these read AMALAPFVGLALGLLAGSAVF, TLLPAVVGVTVLALVTRGLHL, TIGAFGAIIVLFVVLLQVGAL, ILVAAMTSRLAATLACTGAVP, DAALSFLAVCAVAALAGLLDF, ALRAVLAVWVGTGVSFLLRRYLL, and ILGGLIEITAAATLLVMAMTI.

Belongs to the CobS family. Mg(2+) is required as a cofactor.

It is found in the cell membrane. It carries out the reaction alpha-ribazole + adenosylcob(III)inamide-GDP = adenosylcob(III)alamin + GMP + H(+). The enzyme catalyses alpha-ribazole 5'-phosphate + adenosylcob(III)inamide-GDP = adenosylcob(III)alamin 5'-phosphate + GMP + H(+). It functions in the pathway cofactor biosynthesis; adenosylcobalamin biosynthesis; adenosylcobalamin from cob(II)yrinate a,c-diamide: step 7/7. Its function is as follows. Joins adenosylcobinamide-GDP and alpha-ribazole to generate adenosylcobalamin (Ado-cobalamin). Also synthesizes adenosylcobalamin 5'-phosphate from adenosylcobinamide-GDP and alpha-ribazole 5'-phosphate. The polypeptide is Adenosylcobinamide-GDP ribazoletransferase (Frankia casuarinae (strain DSM 45818 / CECT 9043 / HFP020203 / CcI3)).